Consider the following 182-residue polypeptide: Hypoxanthine/guanine phosphoribosyltransferase (182 aa).

Belongs to the purine/pyrimidine phosphoribosyltransferase family. Archaeal HPRT subfamily. Homodimer.

The protein resides in the cytoplasm. It catalyses the reaction IMP + diphosphate = hypoxanthine + 5-phospho-alpha-D-ribose 1-diphosphate. The enzyme catalyses GMP + diphosphate = guanine + 5-phospho-alpha-D-ribose 1-diphosphate. The protein operates within purine metabolism; IMP biosynthesis via salvage pathway; IMP from hypoxanthine: step 1/1. Functionally, catalyzes a salvage reaction resulting in the formation of IMP that is energically less costly than de novo synthesis. This chain is Hypoxanthine/guanine phosphoribosyltransferase, found in Methanosphaerula palustris (strain ATCC BAA-1556 / DSM 19958 / E1-9c).